The primary structure comprises 275 residues: LIM/homeobox protein Awh (275 aa).

2 LIM zinc-binding domains span residues 6 to 67 and 68 to 129; these read RSCA…NFGA and KCSK…TVEG. At Thr-126 the chain carries Phosphothreonine. Positions 148 to 207 form a DNA-binding region, homeobox; it reads TKRVRTTFTEEQLQVLQANFQIDSNPDGQDLERIASVTGLSKRVTQVWFQNSRARQKKHI. Residues 253–275 are disordered; that stretch reads PTHESSMDELSQDSSVHCMPSEV.

As to expression, first detected in neuroblasts in stage 9 embryos. Expressed in all 10 abdominal segments and in the labial segment during early embryogenesis. Expressed in the stage 14 developing epithelium. By embryonic stage 16, expression is refined to the abdominal histoblasts and salivary gland imaginal ring cells. Expressed in both larval and imaginal cells between the salivary gland and the salivary gland imaginal ring, in late third instar larvae. Also expressed in specific areas of the larval wing, leg and eye-antennal disks.

Its subcellular location is the nucleus. Its function is as follows. Probable transcription factor. Required for the establishment of a subset of imaginal tissues: the abdominal histoblasts and the salivary gland imaginal rings. This chain is LIM/homeobox protein Awh, found in Drosophila melanogaster (Fruit fly).